The following is a 418-amino-acid chain: MFRRLLIATVVGILAAFAVAGFRHAMLLLEWLFLNNDSGSLVNAATNLSPWRRLLTPALGGLAAGLLLMGWQKFTQQRPHAPTDYMEALQTDGQFDYAASLVKSLASLLVVTSGSAIGREGAMILLAALAASCFAQRFTPRQEWKLWIACGAAAGMAAAYRAPLAGSLFIAEVLFGTMMLASLGPVIISAVVALLVSNLINHSDALLYSVQLSVTVQARDYALIISTGVLAGLCGPLLLTLMNACHRGFVSLKLAPPWQLALGGLIVGLLSLFTPAVWGNGYSTVQSFLTAPPLLMIIAGIFLCKLFAVLASSGSGAPGGVFTPTLFIGLAIGMLYGRSLGLWFPDGEEITLLLGLTGMATLLAATTHAPIMSTLMICEMTGEYQLLPGLLIACVIASVISRTLHRDSIYRQHTAKHS.

10 consecutive transmembrane segments (helical) span residues 5 to 25, 54 to 74, 146 to 166, 168 to 188, 222 to 242, 258 to 278, 291 to 311, 316 to 336, 352 to 372, and 380 to 400; these read LLIA…FRHA, LLTP…WQKF, LWIA…PLAG, LFIA…PVII, ALII…LTLM, WQLA…PAVW, APPL…AVLA, GAPG…GMLY, LLLG…APIM, and MTGE…ASVI.

The protein belongs to the chloride channel (TC 2.A.49) family. ClcB subfamily.

It is found in the cell inner membrane. Functionally, probably acts as an electrical shunt for an outwardly-directed proton pump that is linked to amino acid decarboxylation, as part of the extreme acid resistance (XAR) response. This is Voltage-gated ClC-type chloride channel ClcB from Escherichia coli (strain SMS-3-5 / SECEC).